Consider the following 445-residue polypeptide: tRNA-2-methylthio-N(6)-dimethylallyladenosine synthase (445 aa).

The MTTase N-terminal domain maps to 7 to 121 (KHFYIKSFGC…LPELIEKAAS (115 aa)). C16, C52, C84, C156, C160, and C163 together coordinate [4Fe-4S] cluster. The Radical SAM core domain occupies 142–374 (RQVGASAFLT…QALLNQQQFD (233 aa)). The 62-residue stretch at 377 to 438 (QQTIGRKATV…PNSVKGQFLD (62 aa)) folds into the TRAM domain.

The protein belongs to the methylthiotransferase family. MiaB subfamily. In terms of assembly, monomer. Requires [4Fe-4S] cluster as cofactor.

It localises to the cytoplasm. It carries out the reaction N(6)-dimethylallyladenosine(37) in tRNA + (sulfur carrier)-SH + AH2 + 2 S-adenosyl-L-methionine = 2-methylsulfanyl-N(6)-dimethylallyladenosine(37) in tRNA + (sulfur carrier)-H + 5'-deoxyadenosine + L-methionine + A + S-adenosyl-L-homocysteine + 2 H(+). In terms of biological role, catalyzes the methylthiolation of N6-(dimethylallyl)adenosine (i(6)A), leading to the formation of 2-methylthio-N6-(dimethylallyl)adenosine (ms(2)i(6)A) at position 37 in tRNAs that read codons beginning with uridine. This Zymomonas mobilis subsp. mobilis (strain ATCC 31821 / ZM4 / CP4) protein is tRNA-2-methylthio-N(6)-dimethylallyladenosine synthase.